The chain runs to 147 residues: Endoribonuclease YbeY (147 aa).

Zn(2+) contacts are provided by His-107, His-111, and His-117.

The protein belongs to the endoribonuclease YbeY family. Zn(2+) serves as cofactor.

It is found in the cytoplasm. Its function is as follows. Single strand-specific metallo-endoribonuclease involved in late-stage 70S ribosome quality control and in maturation of the 3' terminus of the 16S rRNA. This is Endoribonuclease YbeY from Solibacter usitatus (strain Ellin6076).